Here is a 273-residue protein sequence, read N- to C-terminus: 2,3,4,5-tetrahydropyridine-2,6-dicarboxylate N-succinyltransferase (273 aa).

Arginine 104 and aspartate 141 together coordinate substrate.

The protein belongs to the transferase hexapeptide repeat family. In terms of assembly, homotrimer.

It is found in the cytoplasm. It carries out the reaction (S)-2,3,4,5-tetrahydrodipicolinate + succinyl-CoA + H2O = (S)-2-succinylamino-6-oxoheptanedioate + CoA. The protein operates within amino-acid biosynthesis; L-lysine biosynthesis via DAP pathway; LL-2,6-diaminopimelate from (S)-tetrahydrodipicolinate (succinylase route): step 1/3. The chain is 2,3,4,5-tetrahydropyridine-2,6-dicarboxylate N-succinyltransferase from Psychrobacter sp. (strain PRwf-1).